Reading from the N-terminus, the 58-residue chain is U7-ctenitoxin-Pr1a (58 aa).

Cystine bridges form between C2-C16, C9-C22, C13-C48, C15-C40, C18-C55, and C24-C38.

In terms of tissue distribution, expressed by the venom gland.

It localises to the secreted. Functionally, probable neurotoxin. The chain is U7-ctenitoxin-Pr1a from Phoneutria reidyi (Brazilian Amazonian armed spider).